A 662-amino-acid polypeptide reads, in one-letter code: Rap guanine nucleotide exchange factor-like 1 (662 aa).

Residues 1–149 (MKPLEKFLKK…PPWAPLGAPE (149 aa)) form a disordered region. Positions 20 to 48 (VAGGPGGGLGSCGGPGGGGGPGGGGGPAG) are enriched in gly residues. Positions 49 to 64 (GQRSLQRRQSVSRLLL) are enriched in low complexity. Residues 73–82 (AEPGLEPPVP) show a composition bias toward pro residues. The segment covering 120-135 (LRSPSSYSSDELSPGE) has biased composition (low complexity). The Ras-GEF domain occupies 424 to 660 (EPEDVANHLT…FELSYKLEAN (237 aa)).

In terms of biological role, probable guanine nucleotide exchange factor (GEF). The chain is Rap guanine nucleotide exchange factor-like 1 (RAPGEFL1) from Homo sapiens (Human).